We begin with the raw amino-acid sequence, 504 residues long: MGKFTSFLKRAGSATKNALTSDAAKRMYKMAGKTLQKVVESEVGSSAIDGVMQGTIQSIIQGENLGDSIRQAVILNVAGTLESAPDPLSPGEQLLYNKVSEIERAEKEDRVIETHNKKIIEKYGEDLLEIRKIMKGEAEAEQLEGKEMEYVEKALKGMLKIGKDQSERITRLYRALQTEEDLRTSDETRMISEYREKFDALKQAIELEQQATHEEAMQEMLDLSAEVIETAAEEVPIFGAGQANVVATTRAIQGGLKLKEIIDKLTGIDLSHLKVADIHPHIIEKAMLKDRIPDNELAMAIKSKVEVIDEMNTETEHVIESIIPLVKKEYEKHDNKYHVNIPSALKIHSEHTPKVHIYTTPWDSDKVFICRCIAPHHQQRSFMIGFDLEVEFVFYEDTSVEGHIMHGGAVSIEGRGFRQAYSEFMNSLVYPSTPELHKRRLQRSLGSHPIYMGSMVITVSYEQLVSNAMKLVYDTDLQMHCLRGPLKFQRRTLMNALLFGVKVA.

An involved in membrane permeabilization region spans residues 1–42 (MGKFTSFLKRAGSATKNALTSDAAKRMYKMAGKTLQKVVESE).

Belongs to the orbivirus VP5 family.

The protein resides in the virion. In terms of biological role, VP5 protein is one of the two proteins (with VP2) which constitute the virus particle outer capsid. Acts as a membrane permeabilization protein that mediates release of viral particles from endosomal compartments into the cytoplasm. Permeabilization activity is probably negatively regulated by VP2 and is triggered by endosomal degradation of VP2 and exposure to low pH. The protein is Outer capsid protein VP5 (Segment-6) of African horse sickness virus 6 (AHSV-6).